Consider the following 624-residue polypeptide: UvrABC system protein C (624 aa).

A GIY-YIG domain is found at 27–105 (LSPGVYRMLS…IKSLGPRYNI (79 aa)). The region spanning 215–250 (RRVQHDLTARMESAAEAMEYEAAAVFRDRIRALTRI) is the UVR domain.

The protein belongs to the UvrC family. Interacts with UvrB in an incision complex.

The protein resides in the cytoplasm. The UvrABC repair system catalyzes the recognition and processing of DNA lesions. UvrC both incises the 5' and 3' sides of the lesion. The N-terminal half is responsible for the 3' incision and the C-terminal half is responsible for the 5' incision. The polypeptide is UvrABC system protein C (Paramagnetospirillum magneticum (strain ATCC 700264 / AMB-1) (Magnetospirillum magneticum)).